A 335-amino-acid chain; its full sequence is Probable peptide ABC transporter ATP-binding protein y4tR (335 aa).

In terms of domain architecture, ABC transporter spans 15 to 264 (VRDLETHFYG…PTHPYTRALM (250 aa)). 49 to 56 (GESGCGKS) lines the ATP pocket.

This sequence belongs to the ABC transporter superfamily.

It is found in the cell inner membrane. Functionally, probably part of a binding-protein-dependent transport system y4tOPQRS for a peptide. Probably responsible for energy coupling to the transport system. The polypeptide is Probable peptide ABC transporter ATP-binding protein y4tR (Sinorhizobium fredii (strain NBRC 101917 / NGR234)).